The chain runs to 512 residues: Maturase K (512 aa).

The protein belongs to the intron maturase 2 family. MatK subfamily.

Its subcellular location is the plastid. The protein resides in the chloroplast. In terms of biological role, usually encoded in the trnK tRNA gene intron. Probably assists in splicing its own and other chloroplast group II introns. The sequence is that of Maturase K from Lemna minuta (Least duckweed).